The following is a 100-amino-acid chain: Urease subunit gamma (100 aa).

The protein belongs to the urease gamma subunit family. Heterotrimer of UreA (gamma), UreB (beta) and UreC (alpha) subunits. Three heterotrimers associate to form the active enzyme.

It localises to the cytoplasm. It catalyses the reaction urea + 2 H2O + H(+) = hydrogencarbonate + 2 NH4(+). It functions in the pathway nitrogen metabolism; urea degradation; CO(2) and NH(3) from urea (urease route): step 1/1. The chain is Urease subunit gamma from Pseudoalteromonas translucida (strain TAC 125).